The following is a 277-amino-acid chain: 4-hydroxy-tetrahydrodipicolinate reductase (277 aa).

9-14 (GATGRM) lines the NAD(+) pocket. Residue Lys-37 participates in NADP(+) binding. 75–77 (GTS) contacts NAD(+). Catalysis depends on His-132, which acts as the Proton donor/acceptor. Lys-136 serves as the catalytic Proton donor. Residue 142-143 (GT) coordinates (S)-2,3,4,5-tetrahydrodipicolinate. Positions 245–277 (SRERATQTAPTGAASGPVDDGGPSGQAATVTSA) are disordered.

It belongs to the DapB family.

Its subcellular location is the cytoplasm. It carries out the reaction (S)-2,3,4,5-tetrahydrodipicolinate + NAD(+) + H2O = (2S,4S)-4-hydroxy-2,3,4,5-tetrahydrodipicolinate + NADH + H(+). The enzyme catalyses (S)-2,3,4,5-tetrahydrodipicolinate + NADP(+) + H2O = (2S,4S)-4-hydroxy-2,3,4,5-tetrahydrodipicolinate + NADPH + H(+). The protein operates within amino-acid biosynthesis; L-lysine biosynthesis via DAP pathway; (S)-tetrahydrodipicolinate from L-aspartate: step 4/4. Functionally, catalyzes the conversion of 4-hydroxy-tetrahydrodipicolinate (HTPA) to tetrahydrodipicolinate. The protein is 4-hydroxy-tetrahydrodipicolinate reductase of Clavibacter sepedonicus (Clavibacter michiganensis subsp. sepedonicus).